Here is a 345-residue protein sequence, read N- to C-terminus: Sorting nexin-15 (345 aa).

Residues 1-130 enclose the PX domain; the sequence is MSRQAKDDFL…EFFRGGEVTR (130 aa). The residue at position 105 (arginine 105) is an Omega-N-methylarginine. Residues 133 to 163 form a disordered region; that stretch reads EVSGDLHILPPPLIPTPPPDEPRVQPHETWL. The span at 141–151 shows a compositional bias: pro residues; it reads LPPPLIPTPPP. Phosphoserine is present on residues serine 208 and serine 234. Positions 226-274 are disordered; the sequence is SKEEGAGPSPTHIGELAALEAGSGRPDQEPWEPGGQAEEDDEEGEPAPA. The 74-residue stretch at 272 to 345 folds into the MIT domain; the sequence is APAYLSQATE…AEEILHLHLS (74 aa).

It belongs to the sorting nexin family.

Its function is as follows. May be involved in several stages of intracellular trafficking. Overexpression of SNX15 disrupts the normal trafficking of proteins from the plasma membrane to recycling endosomes or the TGN. The protein is Sorting nexin-15 (SNX15) of Bos taurus (Bovine).